We begin with the raw amino-acid sequence, 514 residues long: Double-stranded RNA-binding protein 6 (514 aa).

DRBM domains lie at 1–70 and 87–155; these read MYKN…ALAR and VYKN…SLRQ. Disordered regions lie at residues 195 to 268 and 455 to 496; these read NNPH…SRFP and EASQ…KDDH. Composition is skewed to polar residues over residues 216–225, 249–263, and 473–484; these read FPQSSHSSYS, AASQTPFRPTESPNP, and SPDSLPKTQLKT.

Functionally, binds double-stranded RNA. The sequence is that of Double-stranded RNA-binding protein 6 (DRB6) from Oryza sativa subsp. japonica (Rice).